The chain runs to 87 residues: MNSKIFAVLLLLGLLSCVLSDQYCPKSSITACKKMNTRNDCCKDDDCTGGSWCCATPCGNFCKYPTDRPGGKRAAGGKSCKTGYVYY.

Positions 1–20 (MNSKIFAVLLLLGLLSCVLS) are cleaved as a signal peptide. A WAP domain is found at 21–66 (DQYCPKSSITACKKMNTRNDCCKDDDCTGGSWCCATPCGNFCKYPT). Disulfide bonds link Cys-24–Cys-54, Cys-32–Cys-58, Cys-41–Cys-53, Cys-42–Cys-80, and Cys-47–Cys-62.

It belongs to the venom protein 11 family. 01 (wap-1) subfamily. Contains 5 disulfide bonds. In terms of tissue distribution, expressed by the venom gland.

It is found in the secreted. Its function is as follows. Has antibacterial activity. This Lycosa singoriensis (Wolf spider) protein is U15-lycotoxin-Ls1h.